The following is a 168-amino-acid chain: uncharacterized protein (168 aa).

Disordered stretches follow at residues 37-74, 81-100, and 117-168; these read GGSK…SQFT, QYNY…PNYY, and MQPF…EETN. 2 stretches are compositionally biased toward polar residues: residues 52-74 and 82-95; these read HSGQ…SQFT and YNYN…TRSV. Residues 120-129 show a composition bias toward low complexity; the sequence is FNNQSFNNQS. Polar residues predominate over residues 130 to 158; that stretch reads RTHQSKTYQHNQQKRSFNGPRNNGPQNNV.

This is an uncharacterized protein from Acanthamoeba polyphaga (Amoeba).